We begin with the raw amino-acid sequence, 182 residues long: Ribulose bisphosphate carboxylase small subunit, chloroplastic 4 (182 aa).

The transit peptide at Met-1 to Arg-41 directs the protein to the chloroplast.

The protein belongs to the RuBisCO small chain family. In terms of assembly, heterohexadecamer of 8 large and 8 small subunits.

It localises to the plastid. The protein resides in the chloroplast. In terms of biological role, ruBisCO catalyzes two reactions: the carboxylation of D-ribulose 1,5-bisphosphate, the primary event in carbon dioxide fixation, as well as the oxidative fragmentation of the pentose substrate. Both reactions occur simultaneously and in competition at the same active site. Although the small subunit is not catalytic it is essential for maximal activity. This is Ribulose bisphosphate carboxylase small subunit, chloroplastic 4 from Acetabularia peniculus (Green alga).